The sequence spans 439 residues: Enolase (439 aa).

Substrate is bound by residues histidine 160 and glutamate 169. Glutamate 212 serves as the catalytic Proton donor. Mg(2+) contacts are provided by aspartate 247, glutamate 296, and aspartate 323. The substrate site is built by glutamate 296 and aspartate 323. Lysine 348 serves as the catalytic Proton acceptor. Substrate-binding positions include 375–378 (SHRS) and lysine 399.

This sequence belongs to the enolase family. As to quaternary structure, homodimer. Requires Mg(2+) as cofactor.

It is found in the cytoplasm. The enzyme catalyses (2R)-2-phosphoglycerate = phosphoenolpyruvate + H2O. It participates in carbohydrate degradation; glycolysis; pyruvate from D-glyceraldehyde 3-phosphate: step 4/5. The chain is Enolase (ENO) from Rhodotorula mucilaginosa (Yeast).